The primary structure comprises 281 residues: MANPWWTNQSGLAGMVDHSVSSGHHQNHHHQSLLTKGDLGIAMNQSQDNDQDEEDDPREGAVEVVNRRPRGRPPGSKNKPKAPIFVTRDSPNALRSHVLEISDGSDVADTIAHFSRRRQRGVCVLSGTGSVANVTLRQAAAPGGVVSLQGRFEILSLTGAFLPGPSPPGSTGLTVYLAGVQGQVVGGSVVGPLLAIGSVMVIAATFSNATYERLPMEEEEDGGGSRQIHGGGDSPPRIGSNLPDLSGMAGPGYNMPPHLIPNGAGQLGHEPYTWVHARPPY.

Disordered regions lie at residues 43 to 85 and 216 to 247; these read MNQS…APIF and MEEE…DLSG. Residues 67 to 79 constitute a DNA-binding region (a.T hook); the sequence is RRPRGRPPGSKNK. The PPC domain occupies 91–229; it reads PNALRSHVLE…EDGGGSRQIH (139 aa).

Its subcellular location is the nucleus. Its function is as follows. Transcription factor that specifically binds AT-rich DNA sequences related to the nuclear matrix attachment regions (MARs). Negatively regulates plant innate immunity (PTI) to pathogens through the down-regulation of the PAMP-triggered NHO1 and FRK1 expression. The chain is AT-hook motif nuclear-localized protein 20 from Arabidopsis thaliana (Mouse-ear cress).